The chain runs to 239 residues: Tubulin beta-3 chain (239 aa).

N22 is a GTP binding site. The tract at residues 207–239 (EESNMNDLVSEYQQYQDASAEPXXEQEEDYEEA) is disordered. The span at 230 to 239 (XEQEEDYEEA) shows a compositional bias: acidic residues.

It belongs to the tubulin family. Dimer of alpha and beta chains. A typical microtubule is a hollow water-filled tube with an outer diameter of 25 nm and an inner diameter of 15 nM. Alpha-beta heterodimers associate head-to-tail to form protofilaments running lengthwise along the microtubule wall with the beta-tubulin subunit facing the microtubule plus end conferring a structural polarity. Microtubules usually have 13 protofilaments but different protofilament numbers can be found in some organisms and specialized cells. The cofactor is Mg(2+).

The protein localises to the cytoplasm. Its subcellular location is the cytoskeleton. Functionally, tubulin is the major constituent of microtubules, a cylinder consisting of laterally associated linear protofilaments composed of alpha- and beta-tubulin heterodimers. Microtubules grow by the addition of GTP-tubulin dimers to the microtubule end, where a stabilizing cap forms. Below the cap, tubulin dimers are in GDP-bound state, owing to GTPase activity of alpha-tubulin. This is Tubulin beta-3 chain (TUBB3) from Anemia phyllitidis (Fern).